A 122-amino-acid polypeptide reads, in one-letter code: Large ribosomal subunit protein bL12 (122 aa).

This sequence belongs to the bacterial ribosomal protein bL12 family. In terms of assembly, homodimer. Part of the ribosomal stalk of the 50S ribosomal subunit. Forms a multimeric L10(L12)X complex, where L10 forms an elongated spine to which 2 to 4 L12 dimers bind in a sequential fashion. Binds GTP-bound translation factors.

Forms part of the ribosomal stalk which helps the ribosome interact with GTP-bound translation factors. Is thus essential for accurate translation. This Shewanella loihica (strain ATCC BAA-1088 / PV-4) protein is Large ribosomal subunit protein bL12.